The chain runs to 327 residues: Transcription factor bHLH71 (327 aa).

Disordered regions lie at residues isoleucine 46 to methionine 88 and alanine 151 to serine 176. Residues arginine 65–valine 76 are compositionally biased toward basic residues. Residues cysteine 77 to methionine 88 show a composition bias toward basic and acidic residues. In terms of domain architecture, bHLH spans asparagine 85–leucine 136. Polar residues predominate over residues lysine 152–glutamine 169.

Homodimer. Interacts with FAMA. In terms of tissue distribution, expressed in leaves, stems, and flowers.

Its subcellular location is the nucleus. Transcription factor. May be involved in the differentiation of stomatal guard cells. This chain is Transcription factor bHLH71 (BHLH71), found in Arabidopsis thaliana (Mouse-ear cress).